The following is a 519-amino-acid chain: MGLATAPLGWTYVAWFGQIPLWIWIFRANTTRLNFTQLKQFLISRSLTAIAWGGGFYGVALFWITGVHPLTWLGVPWLASLAIAAFCWLAITAWGVVLVFVWLLAMAVWEVTTARTKVNSTFKKYLFILWGTASWCGLETLWSHSILWWSPVAYTQSPSQLHFLQWGAIGGPALLSAFIVAVNGFLALGLIDFLDGKTVNKNKQNWHYFLIAILIWLFCQGGGWLLYQKPLADTPEEKINVGIIQGNIPNQIKFNSEGWQRAIAGYTEGYKKLTEQGAEIVLTPEGALPYLWETVVAKSGFYQAILQTQVPVWLGAYGTKGDGYTNSLLTVDGQGKLLGRYDKFKLVPLGEYIPLSNVFGQLIQRLSPLKEQLLPGDRPQVLPTPFGPAAVVICYESAFPDLLRSQLLQGGEFILSSANNAHYSDTMAAQHHALDVMRAIEGDRWLARATNTGLSAIINPRGKTLWLSAMNQYEIHAAPIYRRRGLILYSRWGDWVVFLLLVVSAIAWLYQIVFPLNQR.

A run of 6 helical transmembrane segments spans residues 6-26 (APLGWTYVAWFGQIPLWIWIF), 47-67 (LTAIAWGGGFYGVALFWITGV), 83-103 (IAAFCWLAITAWGVVLVFVWL), 126-146 (LFILWGTASWCGLETLWSHSI), 174-194 (LLSAFIVAVNGFLALGLIDFL), and 206-226 (WHYFLIAILIWLFCQGGGWLL). The region spanning 244 to 482 (IQGNIPNQIK…YEIHAAPIYR (239 aa)) is the CN hydrolase domain. The active-site Proton acceptor is the glutamate 285. Lysine 343 is a catalytic residue. Cysteine 394 functions as the Nucleophile in the catalytic mechanism. A helical transmembrane segment spans residues 496 to 516 (VVFLLLVVSAIAWLYQIVFPL).

This sequence belongs to the CN hydrolase family. Apolipoprotein N-acyltransferase subfamily.

The protein localises to the cell inner membrane. It carries out the reaction N-terminal S-1,2-diacyl-sn-glyceryl-L-cysteinyl-[lipoprotein] + a glycerophospholipid = N-acyl-S-1,2-diacyl-sn-glyceryl-L-cysteinyl-[lipoprotein] + a 2-acyl-sn-glycero-3-phospholipid + H(+). It functions in the pathway protein modification; lipoprotein biosynthesis (N-acyl transfer). Its function is as follows. Catalyzes the phospholipid dependent N-acylation of the N-terminal cysteine of apolipoprotein, the last step in lipoprotein maturation. In Synechocystis sp. (strain ATCC 27184 / PCC 6803 / Kazusa), this protein is Apolipoprotein N-acyltransferase.